The following is a 441-amino-acid chain: Ribosomal protein uS12 methylthiotransferase RimO (441 aa).

One can recognise an MTTase N-terminal domain in the interval 8–118; sequence PKIGFVSLGC…VLQHVHHYVP (111 aa). Residues C17, C53, C82, C150, C154, and C157 each coordinate [4Fe-4S] cluster. Residues 136–373 enclose the Radical SAM core domain; the sequence is LTPRHYAYLK…MALQQQISAE (238 aa). The region spanning 376-441 is the TRAM domain; it reads QEKVGREILV…DEYDLWGSLV (66 aa).

The protein belongs to the methylthiotransferase family. RimO subfamily. The cofactor is [4Fe-4S] cluster.

Its subcellular location is the cytoplasm. It catalyses the reaction L-aspartate(89)-[ribosomal protein uS12]-hydrogen + (sulfur carrier)-SH + AH2 + 2 S-adenosyl-L-methionine = 3-methylsulfanyl-L-aspartate(89)-[ribosomal protein uS12]-hydrogen + (sulfur carrier)-H + 5'-deoxyadenosine + L-methionine + A + S-adenosyl-L-homocysteine + 2 H(+). In terms of biological role, catalyzes the methylthiolation of an aspartic acid residue of ribosomal protein uS12. The chain is Ribosomal protein uS12 methylthiotransferase RimO from Cronobacter sakazakii (strain ATCC BAA-894) (Enterobacter sakazakii).